The chain runs to 154 residues: MTKQVEIFTDGSCLGNPGPGGYGAILRYKQHEKTFSAGYFLTTNNRMELMAAIVALEALTSPCEVTLSTDSQYVRQGITQWIHNWKKRGWKTTDRKPVRNVDLWQRLDLAIQTHVIQWEWVKGHAGHPENERCDELAREGANSPTLEDTGYNPD.

Residues 1-142 (MTKQVEIFTD…CDELAREGAN (142 aa)) enclose the RNase H type-1 domain. Mg(2+) is bound by residues Asp-10, Glu-48, Asp-70, and Asp-134.

This sequence belongs to the RNase H family. As to quaternary structure, monomer. It depends on Mg(2+) as a cofactor.

The protein resides in the cytoplasm. It catalyses the reaction Endonucleolytic cleavage to 5'-phosphomonoester.. Its function is as follows. Endonuclease that specifically degrades the RNA of RNA-DNA hybrids. This Yersinia enterocolitica serotype O:8 / biotype 1B (strain NCTC 13174 / 8081) protein is Ribonuclease H.